Here is a 1205-residue protein sequence, read N- to C-terminus: cGMP-specific 3',5'-cyclic phosphodiesterase (1205 aa).

Residues 1-153 are disordered; it reads MTDVSSPAGG…TKASTTASQQ (153 aa). Over residues 18 to 32 the composition is skewed to low complexity; the sequence is TTSSSPAATTSASSS. Residues 33–48 show a composition bias toward polar residues; sequence KPLTNGANKTTISTTA. A compositionally biased stretch (low complexity) spans 62–71; that stretch reads GAIPASSSSG. Residues 83–94 show a composition bias toward polar residues; sequence SNNNRPAATNRS. The segment covering 118–140 has biased composition (low complexity); it reads SSSSPSQSPSQTQASIQTQTSQQ. 2 consecutive GAF domains span residues 259-411 and 443-624; these read DIDV…GIGI and NLEC…GLGI. Residues 654-1052 form the PDEase domain; sequence SQDQTEKLTQ…RNWQDLAEKV (399 aa). Histidine 730 acts as the Proton donor in catalysis. Residues histidine 734, histidine 770, aspartate 771, and aspartate 956 each contribute to the a divalent metal cation site. 2 disordered regions span residues 1093–1122 and 1152–1205; these read QQSQ…TGAL and SHVS…CALL. 2 stretches are compositionally biased toward basic and acidic residues: residues 1098-1109 and 1152-1162; these read GSEDSHTPEHQR and SHVSEDMDDKS. Over residues 1171–1191 the composition is skewed to low complexity; that stretch reads ASGSMGRMSASSSTSSAGGQM. Over residues 1195-1205 the composition is skewed to basic residues; sequence SKKRSKLCALL. Residue cysteine 1202 is modified to Cysteine methyl ester. Cysteine 1202 carries S-farnesyl cysteine lipidation. Residues 1203–1205 constitute a propeptide, removed in mature form; it reads ALL.

The protein belongs to the cyclic nucleotide phosphodiesterase family. As to quaternary structure, interacts with PrBP. Requires a divalent metal cation as cofactor.

It localises to the cell membrane. The catalysed reaction is 3',5'-cyclic GMP + H2O = GMP + H(+). Functionally, has a role regulating cGMP transport in Malpighian tubule principal cells. This Drosophila sechellia (Fruit fly) protein is cGMP-specific 3',5'-cyclic phosphodiesterase.